The primary structure comprises 351 residues: Ferredoxin--NADP reductase (351 aa).

Positions 44, 52, 57, 97, 132, 296, and 337 each coordinate FAD.

This sequence belongs to the ferredoxin--NADP reductase type 2 family. Homodimer. It depends on FAD as a cofactor.

The catalysed reaction is 2 reduced [2Fe-2S]-[ferredoxin] + NADP(+) + H(+) = 2 oxidized [2Fe-2S]-[ferredoxin] + NADPH. This is Ferredoxin--NADP reductase from Paraburkholderia phymatum (strain DSM 17167 / CIP 108236 / LMG 21445 / STM815) (Burkholderia phymatum).